The sequence spans 431 residues: 5-methylthioadenosine/S-adenosylhomocysteine deaminase (431 aa).

The Zn(2+) site is built by H68 and H70. Substrate is bound by residues E97 and H186. H213 is a binding site for Zn(2+). Substrate-binding residues include E216 and D301. D301 contributes to the Zn(2+) binding site.

The protein belongs to the metallo-dependent hydrolases superfamily. MTA/SAH deaminase family. The cofactor is Zn(2+).

It catalyses the reaction S-adenosyl-L-homocysteine + H2O + H(+) = S-inosyl-L-homocysteine + NH4(+). The catalysed reaction is S-methyl-5'-thioadenosine + H2O + H(+) = S-methyl-5'-thioinosine + NH4(+). In terms of biological role, catalyzes the deamination of 5-methylthioadenosine and S-adenosyl-L-homocysteine into 5-methylthioinosine and S-inosyl-L-homocysteine, respectively. Is also able to deaminate adenosine. In Halothermothrix orenii (strain H 168 / OCM 544 / DSM 9562), this protein is 5-methylthioadenosine/S-adenosylhomocysteine deaminase.